Consider the following 337-residue polypeptide: Tetraacyldisaccharide 4'-kinase (337 aa).

An ATP-binding site is contributed by 52–59; sequence TLGGAGKT.

This sequence belongs to the LpxK family.

The enzyme catalyses a lipid A disaccharide + ATP = a lipid IVA + ADP + H(+). The protein operates within glycolipid biosynthesis; lipid IV(A) biosynthesis; lipid IV(A) from (3R)-3-hydroxytetradecanoyl-[acyl-carrier-protein] and UDP-N-acetyl-alpha-D-glucosamine: step 6/6. Functionally, transfers the gamma-phosphate of ATP to the 4'-position of a tetraacyldisaccharide 1-phosphate intermediate (termed DS-1-P) to form tetraacyldisaccharide 1,4'-bis-phosphate (lipid IVA). The polypeptide is Tetraacyldisaccharide 4'-kinase (Methylobacterium nodulans (strain LMG 21967 / CNCM I-2342 / ORS 2060)).